Here is a 151-residue protein sequence, read N- to C-terminus: MQPFIFLFILLVIGMMAKNQSLIIAVLFLLIVKSIGLSSKVLPYLEQKGIQLGVTIITIAVLVPIATGKIGFKELAESVRSIYAWIAMLSGIAVALLAKGGVALLAKDPHVTTALVLGTILAVSLFKGVAVGPLIGAGIAYVIMKIVDVFS.

4 helical membrane passes run 4 to 24 (FIFLFILLVIGMMAKNQSLII), 52 to 72 (LGVTIITIAVLVPIATGKIGF), 85 to 105 (WIAMLSGIAVALLAKGGVALL), and 115 to 135 (LVLGTILAVSLFKGVAVGPLI).

It belongs to the UPF0756 family.

It localises to the cell membrane. This chain is UPF0756 membrane protein Aflv_0503, found in Anoxybacillus flavithermus (strain DSM 21510 / WK1).